We begin with the raw amino-acid sequence, 877 residues long: DNA polymerase I (877 aa).

The region spanning 180 to 270 (TPAQFIDLKA…EIGLDDTLLK (91 aa)) is the 5'-3' exonuclease domain. The region spanning 308–468 (DEIDFEIVTD…AKEKMMAELL (161 aa)) is the 3'-5' exonuclease domain.

This sequence belongs to the DNA polymerase type-A family. As to quaternary structure, single-chain monomer with multiple functions.

The enzyme catalyses DNA(n) + a 2'-deoxyribonucleoside 5'-triphosphate = DNA(n+1) + diphosphate. Functionally, in addition to polymerase activity, this DNA polymerase exhibits 3'-5' and 5'-3' exonuclease activity. The sequence is that of DNA polymerase I (polA) from Lactococcus lactis subsp. lactis (strain IL1403) (Streptococcus lactis).